A 405-amino-acid polypeptide reads, in one-letter code: Arginine biosynthesis bifunctional protein ArgJ, mitochondrial (405 aa).

Thr-174, Lys-200, Thr-211, and Glu-300 together coordinate substrate. Thr-211 serves as the catalytic Nucleophile.

This sequence belongs to the ArgJ family. Heterodimer of an alpha and a beta chain. The alpha and beta chains are autoproteolytically processed from a single precursor protein within the mitochondrion.

It is found in the mitochondrion matrix. It catalyses the reaction N(2)-acetyl-L-ornithine + L-glutamate = N-acetyl-L-glutamate + L-ornithine. The catalysed reaction is L-glutamate + acetyl-CoA = N-acetyl-L-glutamate + CoA + H(+). The protein operates within amino-acid biosynthesis; L-arginine biosynthesis; L-ornithine and N-acetyl-L-glutamate from L-glutamate and N(2)-acetyl-L-ornithine (cyclic): step 1/1. It participates in amino-acid biosynthesis; L-arginine biosynthesis; N(2)-acetyl-L-ornithine from L-glutamate: step 1/4. In terms of biological role, catalyzes two activities which are involved in the cyclic version of arginine biosynthesis: the synthesis of acetylglutamate from glutamate and acetyl-CoA, and of ornithine by transacetylation between acetylornithine and glutamate. This chain is Arginine biosynthesis bifunctional protein ArgJ, mitochondrial, found in Candida tropicalis (strain ATCC MYA-3404 / T1) (Yeast).